Reading from the N-terminus, the 134-residue chain is MAISLKVLAPNKNVYQGEAEEVILPSTTGQLGILPGHISLVTAIDIGVLRLRMNSQWKSIALMGGFAEIESDEVIVLVNNAEIGSEINVQNAEQDLKEAKLAISKFSENEKNPEKIKALKQVSKAEARIQAAKN.

Belongs to the ATPase epsilon chain family. In terms of assembly, F-type ATPases have 2 components, CF(1) - the catalytic core - and CF(0) - the membrane proton channel. CF(1) has five subunits: alpha(3), beta(3), gamma(1), delta(1), epsilon(1). CF(0) has three main subunits: a, b and c.

Its subcellular location is the cellular thylakoid membrane. Functionally, produces ATP from ADP in the presence of a proton gradient across the membrane. This chain is ATP synthase epsilon chain, found in Prochlorococcus marinus (strain MIT 9215).